The following is a 137-amino-acid chain: Large ribosomal subunit protein uL16 (137 aa).

It belongs to the universal ribosomal protein uL16 family. As to quaternary structure, part of the 50S ribosomal subunit.

Binds 23S rRNA and is also seen to make contacts with the A and possibly P site tRNAs. This chain is Large ribosomal subunit protein uL16, found in Wolbachia sp. subsp. Brugia malayi (strain TRS).